The chain runs to 414 residues: Mini-circle putative transposase for IS117 (414 aa).

This Streptomyces coelicolor (strain ATCC BAA-471 / A3(2) / M145) protein is Mini-circle putative transposase for IS117.